The following is a 311-amino-acid chain: MKVAVIGAAGGIGQALALLLKNRLPAGSDLALYDIAPVTPGVAADLSHIPTPVSIKGYAGEDPTPALEGADVVLISAGVARKPGMDRADLFNVNAGIVKSLAEKIAVVCPKACVGIITNPVNTTVPIAAEVLKKAGVYDKRRLFGITTLDVIRSETFVAELKGKDPSDIRVPVIGGHSGVTILPLLSQVEGVEFTAEEVEALTKRIQNAGTEVVEAKAGGGSATLSMGQAACRFGLALVRALQGEEGVVECAYVEGDSEHAPYFAQPVKLGKEGVEEVLSYGELSDFEKAALDGMLETLNGDINIGVEFAK.

Residues 7-13 (GAAGGIG) and Asp-34 contribute to the NAD(+) site. The substrate site is built by Arg-81 and Arg-87. NAD(+)-binding positions include Asn-94 and 117–119 (ITN). Substrate is bound by residues Asn-119 and Arg-153. The active-site Proton acceptor is His-177. NAD(+) is bound at residue Met-227.

Belongs to the LDH/MDH superfamily. MDH type 1 family. Homodimer.

The enzyme catalyses (S)-malate + NAD(+) = oxaloacetate + NADH + H(+). Its function is as follows. Catalyzes the reversible oxidation of malate to oxaloacetate. The protein is Malate dehydrogenase of Vibrio parahaemolyticus serotype O3:K6 (strain RIMD 2210633).